A 271-amino-acid polypeptide reads, in one-letter code: uncharacterized protein (271 aa).

3 helical membrane passes run 30-50 (IWFPIVVGIIASAVGMFGMLL), 189-209 (ALAAVIEELLVNIATAIYFLI), and 218-238 (FLVTVGSSLTYLSNIPMIFAC).

Its subcellular location is the cell membrane. This is an uncharacterized protein from Aquifex aeolicus (strain VF5).